We begin with the raw amino-acid sequence, 103 residues long: UPF0145 protein BC_5181 (103 aa).

The protein belongs to the UPF0145 family.

The chain is UPF0145 protein BC_5181 from Bacillus cereus (strain ATCC 14579 / DSM 31 / CCUG 7414 / JCM 2152 / NBRC 15305 / NCIMB 9373 / NCTC 2599 / NRRL B-3711).